The chain runs to 354 residues: Major egg antigen (354 aa).

The tract at residues 1–21 is disordered; it reads MSGGKQHNAVSIPVNREQRSF. SHSP domains lie at 122–233 and 251–354; these read SVND…VAVR and AKGV…AITH.

The protein belongs to the small heat shock protein (HSP20) family.

The protein is Major egg antigen of Schistosoma mansoni (Blood fluke).